Here is a 262-residue protein sequence, read N- to C-terminus: 14-3-3-like protein GF14-E (262 aa).

This sequence belongs to the 14-3-3 family. In terms of tissue distribution, ubiquitous.

The protein resides in the cytoplasm. Its subcellular location is the nucleus. Functionally, is associated with a DNA binding complex that binds to the G box, a well-characterized cis-acting DNA regulatory element found in plant genes. The protein is 14-3-3-like protein GF14-E (GF14E) of Oryza sativa subsp. japonica (Rice).